The primary structure comprises 465 residues: Ribulose bisphosphate carboxylase large chain (465 aa).

K4 bears the N6,N6,N6-trimethyllysine mark. 2 residues coordinate substrate: N113 and T163. Catalysis depends on K165, which acts as the Proton acceptor. K167 serves as a coordination point for substrate. Mg(2+) contacts are provided by K191, D193, and E194. K191 is subject to N6-carboxylysine. Catalysis depends on H284, which acts as the Proton acceptor. The substrate site is built by R285, H317, and S369.

Belongs to the RuBisCO large chain family. Type I subfamily. In terms of assembly, heterohexadecamer of 8 large chains and 8 small chains; disulfide-linked. The disulfide link is formed within the large subunit homodimers. Mg(2+) is required as a cofactor. The disulfide bond which can form in the large chain dimeric partners within the hexadecamer appears to be associated with oxidative stress and protein turnover.

The protein localises to the plastid. It localises to the chloroplast. The catalysed reaction is 2 (2R)-3-phosphoglycerate + 2 H(+) = D-ribulose 1,5-bisphosphate + CO2 + H2O. The enzyme catalyses D-ribulose 1,5-bisphosphate + O2 = 2-phosphoglycolate + (2R)-3-phosphoglycerate + 2 H(+). Its function is as follows. RuBisCO catalyzes two reactions: the carboxylation of D-ribulose 1,5-bisphosphate, the primary event in carbon dioxide fixation, as well as the oxidative fragmentation of the pentose substrate in the photorespiration process. Both reactions occur simultaneously and in competition at the same active site. This chain is Ribulose bisphosphate carboxylase large chain, found in Idesia polycarpa (Iigiri tree).